Consider the following 435-residue polypeptide: AP-2 complex subunit mu (435 aa).

Ser45 is subject to Phosphoserine. Position 156 is a phosphothreonine (Thr156). Positions 170-434 constitute an MHD domain; sequence RNELFLDVLE…IGRSGIYETR (265 aa). Lys341, Lys345, and Lys354 together coordinate a 1,2-diacyl-sn-glycero-3-phospho-(1D-myo-inositol-3,4,5-trisphosphate).

The protein belongs to the adaptor complexes medium subunit family. In terms of assembly, adaptor protein complex 2 (AP-2) is a heterotetramer composed of two large adaptins (alpha-type subunit AP2A1 or AP2A2 and beta-type subunit AP2B1), a medium adaptin (mu-type subunit AP2M1) and a small adaptin (sigma-type subunit AP2S1). Interacts with ATP6V1H and MEGF10. Interacts with EGFR. Interacts with PIP5K1C; tyrosine phosphorylation of PIP5K1C weakens the interaction. Interacts with KIAA0319; required for clathrin-mediated endocytosis of KIAA0319. Interacts with DVL2 (via DEP domain). Interacts with KCNQ1; mediates estrogen-induced internalization via clathrin-coated vesicles. Together with AP2A1 or AP2A2 and AP2B1, it interacts with ADAM10; this interaction facilitates ADAM10 endocytosis from the plasma membrane during long-term potentiation in hippocampal neurons. Probably interacts with ACE2 (via endocytic sorting signal motif); the interaction is inhibited by ACE2 phosphorylation. Interacts with RALBP1; the interaction is direct. Interacts with TMEM106B (via N-terminus). In terms of processing, phosphorylation at Thr-156 increases the affinity of the AP-2 complex for cargo membrane proteins during the initial stages of endocytosis.

It localises to the cell membrane. Its subcellular location is the membrane. The protein localises to the coated pit. Functionally, component of the adaptor protein complex 2 (AP-2). Adaptor protein complexes function in protein transport via transport vesicles in different membrane traffic pathways. Adaptor protein complexes are vesicle coat components and appear to be involved in cargo selection and vesicle formation. AP-2 is involved in clathrin-dependent endocytosis in which cargo proteins are incorporated into vesicles surrounded by clathrin (clathrin-coated vesicles, CCVs) which are destined for fusion with the early endosome. The clathrin lattice serves as a mechanical scaffold but is itself unable to bind directly to membrane components. Clathrin-associated adaptor protein (AP) complexes which can bind directly to both the clathrin lattice and to the lipid and protein components of membranes are considered to be the major clathrin adaptors contributing the CCV formation. AP-2 also serves as a cargo receptor to selectively sort the membrane proteins involved in receptor-mediated endocytosis. AP-2 seems to play a role in the recycling of synaptic vesicle membranes from the presynaptic surface. AP-2 recognizes Y-X-X-[FILMV] (Y-X-X-Phi) and [ED]-X-X-X-L-[LI] endocytosis signal motifs within the cytosolic tails of transmembrane cargo molecules. AP-2 may also play a role in maintaining normal post-endocytic trafficking through the ARF6-regulated, non-clathrin pathway. During long-term potentiation in hippocampal neurons, AP-2 is responsible for the endocytosis of ADAM10. The AP-2 mu subunit binds to transmembrane cargo proteins; it recognizes the Y-X-X-Phi motifs. The surface region interacting with to the Y-X-X-Phi motif is inaccessible in cytosolic AP-2, but becomes accessible through a conformational change following phosphorylation of AP-2 mu subunit at Thr-156 in membrane-associated AP-2. The membrane-specific phosphorylation event appears to involve assembled clathrin which activates the AP-2 mu kinase AAK1. Plays a role in endocytosis of frizzled family members upon Wnt signaling. This Pongo abelii (Sumatran orangutan) protein is AP-2 complex subunit mu (AP2M1).